We begin with the raw amino-acid sequence, 105 residues long: Ribosomal silencing factor RsfS (105 aa).

This sequence belongs to the Iojap/RsfS family. Interacts with ribosomal protein uL14 (rplN).

The protein resides in the cytoplasm. Functionally, functions as a ribosomal silencing factor. Interacts with ribosomal protein uL14 (rplN), blocking formation of intersubunit bridge B8. Prevents association of the 30S and 50S ribosomal subunits and the formation of functional ribosomes, thus repressing translation. This is Ribosomal silencing factor RsfS from Escherichia coli O6:H1 (strain CFT073 / ATCC 700928 / UPEC).